Reading from the N-terminus, the 244-residue chain is Ribonuclease P protein component 3 (244 aa).

It belongs to the eukaryotic/archaeal RNase P protein component 3 family. As to quaternary structure, consists of a catalytic RNA component and at least 4-5 protein subunits.

It is found in the cytoplasm. The enzyme catalyses Endonucleolytic cleavage of RNA, removing 5'-extranucleotides from tRNA precursor.. Its function is as follows. Part of ribonuclease P, a protein complex that generates mature tRNA molecules by cleaving their 5'-ends. The polypeptide is Ribonuclease P protein component 3 (Methanopyrus kandleri (strain AV19 / DSM 6324 / JCM 9639 / NBRC 100938)).